Here is a 355-residue protein sequence, read N- to C-terminus: MGCRQSSEEKEAARRSRRIDRHLRSESQRQRREIKLLLLGTSNSGKSTIVKQMKIIHSGGFNLDACKEYKPLIIYNAIDSLTRIIRALAALKIDFHNPDRAYDAVQLFALTGPAESKGEITPELLGVMRRLWADPGAQACFGRSSEYHLEDNAAYYLNDLERIAAPDYIPTVEDILRSRDMTTGIVENKFTFKELTFKMVDVGGQRSERKKWIHCFEGVTAIIFCVELSGYDLKLYEDNQTSRMAESLRLFDSICNNNWFINTSLILFLNKKDLLAEKIRRIPLSVCFPEYKGQNTYEEAAVYIQRQFEDLNRNKETKEIYSHFTCATDTSNIQFVFDAVTDVIIQNNLKYIGLC.

Positions 1–14 (MGCRQSSEEKEAAR) are enriched in basic and acidic residues. Positions 1–26 (MGCRQSSEEKEAARRSRRIDRHLRSE) are disordered. A lipid anchor (N-myristoyl glycine) is attached at Gly-2. Cys-3 carries the S-palmitoyl cysteine lipid modification. Positions 32 to 355 (REIKLLLLGT…QNNLKYIGLC (324 aa)) constitute a G-alpha domain. Residues 35 to 48 (KLLLLGTSNSGKST) form a G1 motif region. GTP contacts are provided by residues 40–47 (GTSNSGKS), 176–182 (LRSRDMT), 201–205 (DVGGQ), 270–273 (NKKD), and Ala-327. Positions 47 and 182 each coordinate Mg(2+). The G2 motif stretch occupies residues 174-182 (DILRSRDMT). A G3 motif region spans residues 197–206 (FKMVDVGGQR). Positions 266-273 (ILFLNKKD) are G4 motif. A G5 motif region spans residues 325–330 (TCATDT).

The protein belongs to the G-alpha family. G(i/o/t/z) subfamily. As to quaternary structure, G-proteins are composed of 3 units; alpha, beta and gamma. The alpha chain contains the guanine nucleotide binding site. Interacts with ADGRB2.

The protein localises to the membrane. Its function is as follows. Guanine nucleotide-binding proteins (G proteins) are involved as modulators or transducers in various transmembrane signaling systems. The protein is Guanine nucleotide-binding protein G(z) subunit alpha (Gnaz) of Mus musculus (Mouse).